Consider the following 447-residue polypeptide: Zinc finger protein ZIC 1 (447 aa).

The C2H2-type 1; atypical zinc finger occupies 225–260 (LICKWIEPEQLANPKKSCNKTFSTMHELVTHVTVEH). A C2H2-type 2; atypical zinc finger spans residues 269-296 (HICFWEECPREGKPFKAKYKLVNHIRVH). 3 C2H2-type zinc fingers span residues 302-326 (FPCP…KRTH), 332-356 (FKCE…MHVH), and 362-384 (YLCK…MKVH). The interval 375-431 (SSLRKHMKVHESSSQGSQPSPAASSGYESSTPPTIVSPSTDNPTTSSLSPSSSAVHH) is disordered. The span at 386–427 (SSSQGSQPSPAASSGYESSTPPTIVSPSTDNPTTSSLSPSSS) shows a compositional bias: low complexity.

It belongs to the GLI C2H2-type zinc-finger protein family. Interacts (via the C2H2-type domains 3, 4 and 5) with MDFIC (via the C2H2-type domains 3, 4 and 5). Interacts with GLI1; the interaction enhances transcription activation. Interacts with GLI2. Interacts with GLI3; the interaction enhances transcription activation. CNS. A high level expression is seen in the cerebellum. Detected in the nuclei of the cerebellar granule cell lineage from the progenitor cells of the external germinal layer to the postmigrated cells of the internal granular layer. Detected in medulloblastoma (26/29 cases), but not present in all other tumors examined.

It is found in the nucleus. The protein localises to the cytoplasm. In terms of biological role, acts as a transcriptional activator. Involved in neurogenesis. Plays important roles in the early stage of organogenesis of the CNS, as well as during dorsal spinal cord development and maturation of the cerebellum. Involved in the spatial distribution of mossy fiber (MF) neurons within the pontine gray nucleus (PGN). Plays a role in the regulation of MF axon pathway choice. Promotes MF migration towards ipsilaterally-located cerebellar territories. May have a role in shear flow mechanotransduction in osteocytes. Retains nuclear GLI1 and GLI3 in the cytoplasm. Binds to the minimal GLI-consensus sequence 5'-TGGGTGGTC-3'. This is Zinc finger protein ZIC 1 (ZIC1) from Homo sapiens (Human).